The primary structure comprises 506 residues: Putative transporter SVOPL (506 aa).

A run of 10 helical transmembrane segments spans residues 57 to 77, 104 to 124, 133 to 153, 190 to 210, 220 to 240, 297 to 317, 362 to 382, 397 to 417, 444 to 464, and 472 to 492; these read SIGF…ANIV, ALVS…CGYI, VVFG…FSTS, LLPL…VLGM, WMIR…MFIP, TSLL…GSVL, LISC…LNIV, FFFM…LLFL, IGMG…PFIA, and VILA…GVFF.

This sequence belongs to the major facilitator superfamily.

It is found in the membrane. The polypeptide is Putative transporter SVOPL (svopl) (Danio rerio (Zebrafish)).